The chain runs to 424 residues: Appressorium protein ROW1 (424 aa).

The first 21 residues, 1–21 (MTKLTLTVALVSALLASGASA), serve as a signal peptide directing secretion. 4 disordered regions span residues 19–54 (ASAQ…WQPK), 69–90 (ANRI…GYNT), 278–304 (SGST…CSSV), and 327–398 (SSSA…TQGA). Residues 22–403 (QQPTGTGNGP…NTQGAASSAS (382 aa)) lie on the Extracellular side of the membrane. Polar residues predominate over residues 37–54 (TDLNRNQPTKSWTQWQPK). Composition is skewed to low complexity over residues 295–304 (APSSSQCSSV) and 327–347 (SSSA…SASS). A compositionally biased stretch (gly residues) spans 362-382 (SGTGSGSGSGSGSGSGSGSGS). The span at 383–398 (SSGSSSSGSSSNTQGA) shows a compositional bias: low complexity. Residues 404–424 (SLTISVGLAGLVAIGAAAFAL) form a helical membrane-spanning segment.

The protein resides in the cell membrane. It localises to the secreted. Its function is as follows. Plays a role in the formation of the appressorium, a specialized infection structure with the purpose of penetrating the host surface, and is required for proper remodeling of the appressorium wall and vesicle secretion. In Mycosarcoma maydis (Corn smut fungus), this protein is Appressorium protein ROW1.